The chain runs to 683 residues: Translation initiation factor IF-2 (683 aa).

One can recognise a tr-type G domain in the interval 182–351 (KRPPVVTVMG…ILTAEMEELK (170 aa)). Residues 191-198 (GHVDHGKT) form a G1 region. 191–198 (GHVDHGKT) contacts GTP. The tract at residues 216–220 (GITQH) is G2. Residues 237-240 (DTPG) form a G3 region. Residues 237 to 241 (DTPGH) and 291 to 294 (NKID) each bind GTP. Residues 291–294 (NKID) form a G4 region. The interval 327 to 329 (SAH) is G5.

Belongs to the TRAFAC class translation factor GTPase superfamily. Classic translation factor GTPase family. IF-2 subfamily.

The protein localises to the cytoplasm. In terms of biological role, one of the essential components for the initiation of protein synthesis. Protects formylmethionyl-tRNA from spontaneous hydrolysis and promotes its binding to the 30S ribosomal subunits. Also involved in the hydrolysis of GTP during the formation of the 70S ribosomal complex. The protein is Translation initiation factor IF-2 of Clostridium novyi (strain NT).